Reading from the N-terminus, the 467-residue chain is UTP--glucose-1-phosphate uridylyltransferase (467 aa).

Residues 83–86 (LNGG), K97, Q160, and G189 contribute to the UTP site. A substrate-binding site is contributed by 85–86 (GG). Residues H190 and 218 to 220 (NSD) each bind substrate. Positions 220 and 358 each coordinate UTP.

It belongs to the UDPGP type 1 family.

The protein resides in the cytoplasm. The enzyme catalyses alpha-D-glucose 1-phosphate + UTP + H(+) = UDP-alpha-D-glucose + diphosphate. In terms of biological role, plays a central role as a glucosyl donor in cellular metabolic pathways. This is UTP--glucose-1-phosphate uridylyltransferase (UGPA) from Musa acuminata (Banana).